The sequence spans 254 residues: N(G),N(G)-dimethylarginine dimethylaminohydrolase (254 aa).

Substrate contacts are provided by residues L18, D60, 65–66 (ED), R85, and R132. Residue H162 is the Proton donor of the active site. Residue H162 participates in Zn(2+) binding. Substrate is bound at residue I243. C249 lines the Zn(2+) pocket. C249 acts as the Nucleophile in catalysis.

Belongs to the DDAH family. As to quaternary structure, homodimer.

The catalysed reaction is N(omega),N(omega)-dimethyl-L-arginine + H2O = dimethylamine + L-citrulline. It catalyses the reaction N(omega)-methyl-L-arginine + H2O = L-citrulline + methylamine. Its activity is regulated as follows. Inhibited by zinc ions. Competitively inhibited by lysine. Functionally, hydrolyzes N(G),N(G)-dimethyl-L-arginine (ADMA) and N(G)-monomethyl-L-arginine (MMA). The polypeptide is N(G),N(G)-dimethylarginine dimethylaminohydrolase (Pseudomonas aeruginosa (strain ATCC 15692 / DSM 22644 / CIP 104116 / JCM 14847 / LMG 12228 / 1C / PRS 101 / PAO1)).